Reading from the N-terminus, the 216-residue chain is Orotate phosphoribosyltransferase (216 aa).

Residue K30 participates in 5-phospho-alpha-D-ribose 1-diphosphate binding. Residue 38-39 (FF) coordinates orotate. Residues 75–76 (YK), R102, K103, K106, H108, and 128–136 (DDVITAGTA) each bind 5-phospho-alpha-D-ribose 1-diphosphate. 2 residues coordinate orotate: T132 and R160.

The protein belongs to the purine/pyrimidine phosphoribosyltransferase family. PyrE subfamily. As to quaternary structure, homodimer. Requires Mg(2+) as cofactor.

The enzyme catalyses orotidine 5'-phosphate + diphosphate = orotate + 5-phospho-alpha-D-ribose 1-diphosphate. Its pathway is pyrimidine metabolism; UMP biosynthesis via de novo pathway; UMP from orotate: step 1/2. Its function is as follows. Catalyzes the transfer of a ribosyl phosphate group from 5-phosphoribose 1-diphosphate to orotate, leading to the formation of orotidine monophosphate (OMP). The sequence is that of Orotate phosphoribosyltransferase from Acinetobacter baylyi (strain ATCC 33305 / BD413 / ADP1).